Here is a 540-residue protein sequence, read N- to C-terminus: MGLSHSGEIVYIHPSSPVDLFTTCASLPTKPPPSFSDMPSPLFLVSGFLGVCVAYAVANIIRQLLFPNAKEPPVVFHWFPWLGSALTYGKDPYKFLFAARAKYGDVFTFVLLGRNVTVHLGVAGNDFVFNGKETHMNAEEIYGPLCNPVFGEGVVYDCPNSKLMEQKKFVKFGLTTDALKAHVRLIEHEVVNYIKSSRDFKGPSGVINVPPVMAQITIFTAAIALQGPEVRSKLTNEFASLYHDLDGGFSPINFVLPHAPFPHNIKRDRAQLKMRKIYEAIIAERRAGKIPPTTDMISHLMQCSYKNGRPIPDSEISNMMITILMAGQHNSSNIASWIMLHLANEPQLCEELYQEQLDQLADEHGNLPELELHTVEKLKLHSSVVKETLRMHNAIHSIMRLVKQPLPVPNTSWTVPPGHAVLASPGVSANSNEYFLNPTKWDPHRWDDRVIEEDDESEMVDYGYGRTSRGTKSAYLPFGGGRHRCIGEKFAYLNLEVITAVMVRNFRFKNVDGRVDVPGTDYSTMFSRPLEPAEICWERR.

Residues 41–61 (PLFLVSGFLGVCVAYAVANII) form a helical membrane-spanning segment. Position 485 (Cys-485) interacts with heme.

It belongs to the cytochrome P450 family. Heme is required as a cofactor.

It is found in the membrane. The catalysed reaction is a 14alpha-methyl steroid + 3 reduced [NADPH--hemoprotein reductase] + 3 O2 = a Delta(14) steroid + formate + 3 oxidized [NADPH--hemoprotein reductase] + 4 H2O + 4 H(+). It carries out the reaction a 14alpha-methyl steroid + reduced [NADPH--hemoprotein reductase] + O2 = a 14alpha-hydroxymethyl steroid + oxidized [NADPH--hemoprotein reductase] + H2O + H(+). The enzyme catalyses a 14alpha-hydroxymethyl steroid + reduced [NADPH--hemoprotein reductase] + O2 = a 14alpha-formyl steroid + oxidized [NADPH--hemoprotein reductase] + 2 H2O + H(+). It catalyses the reaction a 14alpha-formyl steroid + reduced [NADPH--hemoprotein reductase] + O2 = a Delta(14) steroid + formate + oxidized [NADPH--hemoprotein reductase] + H2O + 2 H(+). The catalysed reaction is lanosterol + 3 reduced [NADPH--hemoprotein reductase] + 3 O2 = 4,4-dimethyl-5alpha-cholesta-8,14,24-trien-3beta-ol + formate + 3 oxidized [NADPH--hemoprotein reductase] + 4 H2O + 4 H(+). It carries out the reaction lanosterol + reduced [NADPH--hemoprotein reductase] + O2 = 32-hydroxylanosterol + oxidized [NADPH--hemoprotein reductase] + H2O + H(+). The enzyme catalyses 32-hydroxylanosterol + reduced [NADPH--hemoprotein reductase] + O2 = 32-oxolanosterol + oxidized [NADPH--hemoprotein reductase] + 2 H2O + H(+). It catalyses the reaction 32-oxolanosterol + reduced [NADPH--hemoprotein reductase] + O2 = 4,4-dimethyl-5alpha-cholesta-8,14,24-trien-3beta-ol + formate + oxidized [NADPH--hemoprotein reductase] + H2O + 2 H(+). The catalysed reaction is eburicol + 3 reduced [NADPH--hemoprotein reductase] + 3 O2 = 14-demethyleburicol + formate + 3 oxidized [NADPH--hemoprotein reductase] + 4 H2O + 4 H(+). It carries out the reaction eburicol + reduced [NADPH--hemoprotein reductase] + O2 = 32-hydroxyeburicol + oxidized [NADPH--hemoprotein reductase] + H2O + H(+). The enzyme catalyses 32-hydroxyeburicol + reduced [NADPH--hemoprotein reductase] + O2 = 32-oxoeburicol + oxidized [NADPH--hemoprotein reductase] + 2 H2O + H(+). It catalyses the reaction 32-oxoeburicol + reduced [NADPH--hemoprotein reductase] + O2 = 14-demethyleburicol + formate + oxidized [NADPH--hemoprotein reductase] + H2O + 2 H(+). It participates in steroid biosynthesis; sterol biosynthesis. Sterol 14-alpha demethylase; part of the gene cluster that mediates the biosynthesis of tetrahydropyranyl antifungal agent lanomycin that acts as an inhibitor of CYP51 and blocks the ergosterol biosynthesis. Sterol 14-alpha-demethylase plays a critical role in the biosynthesis of ergosterol, the major sterol component in fungal membranes that participates in a variety of functions. Acts as a self-resistant CYP51 that contains mutations found in CYP51s isolated from azole resistance strains and that is not inhibited by the final product of the cluster, lanomycin. The protein is Sterol 14-alpha demethylase of Pyrenophora dematioidea (Helminthosporium dematioideum).